A 253-amino-acid chain; its full sequence is 5-oxoprolinase subunit A (253 aa).

Belongs to the LamB/PxpA family. Forms a complex composed of PxpA, PxpB and PxpC.

The enzyme catalyses 5-oxo-L-proline + ATP + 2 H2O = L-glutamate + ADP + phosphate + H(+). In terms of biological role, catalyzes the cleavage of 5-oxoproline to form L-glutamate coupled to the hydrolysis of ATP to ADP and inorganic phosphate. In Shouchella clausii (strain KSM-K16) (Alkalihalobacillus clausii), this protein is 5-oxoprolinase subunit A.